We begin with the raw amino-acid sequence, 185 residues long: UPF0397 protein LJ_1703 (185 aa).

Transmembrane regions (helical) follow at residues 6–26 (GLSVKSVVAIGIGAAIYVILA), 46–66 (FLALLATIYGPVVGFSVGFIG), 78–98 (TWWSWVLATAVLGLIIGLYGM), 113–133 (IGFNIVQIIANVVSWLIIAPV), and 147–167 (FLQGATATITNSISILILGTI).

This sequence belongs to the UPF0397 family.

It localises to the cell membrane. The chain is UPF0397 protein LJ_1703 from Lactobacillus johnsonii (strain CNCM I-12250 / La1 / NCC 533).